The sequence spans 572 residues: Urease subunit alpha (572 aa).

Residues 136–572 (GGIDTHIHWI…VPLAQRYFLF (437 aa)) form the Urease domain. Positions 141, 143, and 224 each coordinate Ni(2+). Position 224 is an N6-carboxylysine (K224). H226 lines the substrate pocket. H253 and H279 together coordinate Ni(2+). H327 (proton donor) is an active-site residue. D367 contributes to the Ni(2+) binding site.

Belongs to the metallo-dependent hydrolases superfamily. Urease alpha subunit family. Heterotrimer of UreA (gamma), UreB (beta) and UreC (alpha) subunits. Three heterotrimers associate to form the active enzyme. Requires Ni cation as cofactor. Post-translationally, carboxylation allows a single lysine to coordinate two nickel ions.

The protein resides in the cytoplasm. It catalyses the reaction urea + 2 H2O + H(+) = hydrogencarbonate + 2 NH4(+). The protein operates within nitrogen metabolism; urea degradation; CO(2) and NH(3) from urea (urease route): step 1/1. In Actinobacillus pleuropneumoniae serotype 7 (strain AP76), this protein is Urease subunit alpha.